A 208-amino-acid polypeptide reads, in one-letter code: ATP-dependent Clp protease proteolytic subunit 1 (208 aa).

The Nucleophile role is filled by serine 108. Histidine 133 is an active-site residue.

It belongs to the peptidase S14 family. As to quaternary structure, fourteen ClpP subunits assemble into 2 heptameric rings which stack back to back to give a disk-like structure with a central cavity, resembling the structure of eukaryotic proteasomes.

The protein resides in the cytoplasm. The enzyme catalyses Hydrolysis of proteins to small peptides in the presence of ATP and magnesium. alpha-casein is the usual test substrate. In the absence of ATP, only oligopeptides shorter than five residues are hydrolyzed (such as succinyl-Leu-Tyr-|-NHMec, and Leu-Tyr-Leu-|-Tyr-Trp, in which cleavage of the -Tyr-|-Leu- and -Tyr-|-Trp bonds also occurs).. In terms of biological role, cleaves peptides in various proteins in a process that requires ATP hydrolysis. Has a chymotrypsin-like activity. Plays a major role in the degradation of misfolded proteins. This is ATP-dependent Clp protease proteolytic subunit 1 from Corynebacterium efficiens (strain DSM 44549 / YS-314 / AJ 12310 / JCM 11189 / NBRC 100395).